The sequence spans 240 residues: Pyridoxine 5'-phosphate synthase (240 aa).

Asn-6 lines the 3-amino-2-oxopropyl phosphate pocket. 8 to 9 (DH) is a binding site for 1-deoxy-D-xylulose 5-phosphate. A 3-amino-2-oxopropyl phosphate-binding site is contributed by Arg-17. His-42 acts as the Proton acceptor in catalysis. Residues Arg-44 and His-49 each coordinate 1-deoxy-D-xylulose 5-phosphate. Glu-69 (proton acceptor) is an active-site residue. Residue Thr-99 coordinates 1-deoxy-D-xylulose 5-phosphate. His-193 functions as the Proton donor in the catalytic mechanism. 3-amino-2-oxopropyl phosphate-binding positions include Gly-194 and 216–217 (GH).

This sequence belongs to the PNP synthase family. In terms of assembly, homooctamer; tetramer of dimers.

The protein localises to the cytoplasm. It catalyses the reaction 3-amino-2-oxopropyl phosphate + 1-deoxy-D-xylulose 5-phosphate = pyridoxine 5'-phosphate + phosphate + 2 H2O + H(+). It functions in the pathway cofactor biosynthesis; pyridoxine 5'-phosphate biosynthesis; pyridoxine 5'-phosphate from D-erythrose 4-phosphate: step 5/5. Catalyzes the complicated ring closure reaction between the two acyclic compounds 1-deoxy-D-xylulose-5-phosphate (DXP) and 3-amino-2-oxopropyl phosphate (1-amino-acetone-3-phosphate or AAP) to form pyridoxine 5'-phosphate (PNP) and inorganic phosphate. This Hydrogenobaculum sp. (strain Y04AAS1) protein is Pyridoxine 5'-phosphate synthase.